The sequence spans 740 residues: 1,4-alpha-glucan branching enzyme GlgB (740 aa).

The active-site Nucleophile is the aspartate 409. Residue glutamate 462 is the Proton donor of the active site.

The protein belongs to the glycosyl hydrolase 13 family. GlgB subfamily. As to quaternary structure, monomer.

The enzyme catalyses Transfers a segment of a (1-&gt;4)-alpha-D-glucan chain to a primary hydroxy group in a similar glucan chain.. Its pathway is glycan biosynthesis; glycogen biosynthesis. Catalyzes the formation of the alpha-1,6-glucosidic linkages in glycogen by scission of a 1,4-alpha-linked oligosaccharide from growing alpha-1,4-glucan chains and the subsequent attachment of the oligosaccharide to the alpha-1,6 position. The chain is 1,4-alpha-glucan branching enzyme GlgB from Methylococcus capsulatus (strain ATCC 33009 / NCIMB 11132 / Bath).